The sequence spans 172 residues: AIG2-like protein B (172 aa).

Substrate is bound at residue Y15–E20. Residue E83 is the Proton acceptor of the active site. The segment covering K146–D165 has biased composition (basic and acidic residues). The tract at residues K146–S172 is disordered.

The protein belongs to the gamma-glutamylcyclotransferase family. As to expression, expressed in flowerss, leaves, stems, seeds and roots.

The protein localises to the cell membrane. Putative gamma-glutamylcyclotransferase. This chain is AIG2-like protein B, found in Arabidopsis thaliana (Mouse-ear cress).